The primary structure comprises 178 residues: uncharacterized protein (178 aa).

The span at 1 to 16 shows a compositional bias: basic and acidic residues; the sequence is MNKRTSVDASKEDLHP. A disordered region spans residues 1 to 43; the sequence is MNKRTSVDASKEDLHPADPQSGEGVPPNRKNTKTSPRGEGTAP.

This is an uncharacterized protein from Homo sapiens (Human).